We begin with the raw amino-acid sequence, 645 residues long: Acetyl-coenzyme A synthetase 2 (645 aa).

CoA is bound by residues 190–193, Thr-308, and Asn-332; that span reads RGGK. ATP contacts are provided by residues 384–386, 408–413, Asp-497, and Arg-512; these read GEP and DTWWQT. Ser-520 provides a ligand contact to CoA. Arg-523 lines the ATP pocket. Mg(2+)-binding residues include Val-534, His-536, and Val-539. Residue Lys-606 is modified to N6-acetyllysine.

It belongs to the ATP-dependent AMP-binding enzyme family. It depends on Mg(2+) as a cofactor. In terms of processing, acetylated. Deacetylation by the SIR2-homolog deacetylase activates the enzyme.

It catalyses the reaction acetate + ATP + CoA = acetyl-CoA + AMP + diphosphate. Functionally, catalyzes the conversion of acetate into acetyl-CoA (AcCoA), an essential intermediate at the junction of anabolic and catabolic pathways. AcsA undergoes a two-step reaction. In the first half reaction, AcsA combines acetate with ATP to form acetyl-adenylate (AcAMP) intermediate. In the second half reaction, it can then transfer the acetyl group from AcAMP to the sulfhydryl group of CoA, forming the product AcCoA. This Pseudomonas aeruginosa (strain ATCC 15692 / DSM 22644 / CIP 104116 / JCM 14847 / LMG 12228 / 1C / PRS 101 / PAO1) protein is Acetyl-coenzyme A synthetase 2.